The sequence spans 319 residues: Tyrosine--tRNA ligase (319 aa).

L-tyrosine is bound at residue tyrosine 35. The 'HIGH' region motif lies at 40–48 (PSGKIHLGH). Tyrosine 156, glutamine 160, aspartate 163, and glutamine 178 together coordinate L-tyrosine. The 'KMSKS' region motif lies at 213-217 (KMSSS). Residue serine 216 coordinates ATP.

The protein belongs to the class-I aminoacyl-tRNA synthetase family. TyrS type 3 subfamily. As to quaternary structure, homodimer.

Its subcellular location is the cytoplasm. It carries out the reaction tRNA(Tyr) + L-tyrosine + ATP = L-tyrosyl-tRNA(Tyr) + AMP + diphosphate + H(+). Functionally, catalyzes the attachment of tyrosine to tRNA(Tyr) in a two-step reaction: tyrosine is first activated by ATP to form Tyr-AMP and then transferred to the acceptor end of tRNA(Tyr). The chain is Tyrosine--tRNA ligase from Methanobrevibacter smithii (strain ATCC 35061 / DSM 861 / OCM 144 / PS).